Reading from the N-terminus, the 261-residue chain is Transmembrane and immunoglobulin domain-containing protein 1 (261 aa).

The first 26 residues, 1-26 (MVWKITGPLQACQLLLVVLSLPQGRT), serve as a signal peptide directing secretion. The region spanning 27 to 113 (SSVLTVNGRT…LQRDQTVSVT (87 aa)) is the Ig-like C2-type 1 domain. The Extracellular segment spans residues 27–215 (SSVLTVNGRT…DFHLLVKDKV (189 aa)). A disulfide bond links C53 and C102. 6 N-linked (GlcNAc...) asparagine glycosylation sites follow: N57, N82, N92, N117, N157, and N189. Positions 121–206 (PPLLSGNGFQ…SSSLKMETMD (86 aa)) constitute an Ig-like C2-type 2 domain. An intrachain disulfide couples C142 to C194. Residues 216–236 (FVMPAEPIIAACVVVVLTMAF) form a helical membrane-spanning segment. Topologically, residues 237 to 261 (ALFSRRKRIMKLCGKKNDPNSETAL) are cytoplasmic.

Homodimer. Post-translationally, N-glycosylated.

The protein resides in the cell membrane. It is found in the cytoplasm. May control cell-cell adhesion, cell migration and proliferation, cell morphology, and protects renal epithelial cells from oxidative cell injury to promote cell survival. The polypeptide is Transmembrane and immunoglobulin domain-containing protein 1 (Mus musculus (Mouse)).